The sequence spans 668 residues: Threonine--tRNA ligase (668 aa).

A TGS domain is found at 1 to 64 (MSQSVSLTFP…TDGKIEIITR (64 aa)). The segment at 245–553 (DHRKLGREMD…LIENFAGHMP (309 aa)) is catalytic. Zn(2+) contacts are provided by Cys347, His398, and His530.

Belongs to the class-II aminoacyl-tRNA synthetase family. In terms of assembly, homodimer. Zn(2+) serves as cofactor.

The protein localises to the cytoplasm. The catalysed reaction is tRNA(Thr) + L-threonine + ATP = L-threonyl-tRNA(Thr) + AMP + diphosphate + H(+). In terms of biological role, catalyzes the attachment of threonine to tRNA(Thr) in a two-step reaction: L-threonine is first activated by ATP to form Thr-AMP and then transferred to the acceptor end of tRNA(Thr). Also edits incorrectly charged L-seryl-tRNA(Thr). The polypeptide is Threonine--tRNA ligase (Rhizobium etli (strain ATCC 51251 / DSM 11541 / JCM 21823 / NBRC 15573 / CFN 42)).